The chain runs to 38 residues: Toxin Bot33 (38 aa).

Intrachain disulfides connect C8/C28, C14/C33, and C18/C35.

Belongs to the short scorpion toxin superfamily. Potassium channel inhibitor family. As to expression, expressed by the venom gland.

The protein resides in the secreted. In terms of biological role, a probable toxin that has no activity on the tested mammalian voltage-gated potassium channels (when tested at 1 uM) and is not toxic to mice. It resembles alpha toxins that block voltage-gated potassium channels. The polypeptide is Toxin Bot33 (Buthus occitanus tunetanus (Common European scorpion)).